Here is a 485-residue protein sequence, read N- to C-terminus: MSFWNSLSITTRYSRLPRCFFTYVQPTPLDNSRWLIWNSELAKQFDLPENVHNHSELLDAFSGEVVPSVFAPLAMKYAGHQFGSYNPDLGDGRGLLLAEIKDKKGNSFDLHLKGAGLTPYSRSGDGRAVLRSTIREYLCSEAMAGLGIPTTRALGMMTSDTPVFREGYETGALLIRMAETHIRFGHFEHLFYSNLLEELKLLSDKVIEWHFPCCLGEDKPYLAMFNNIVDRTAYMIAQWQAVGFAHGVMNTDNMSIIGQTFDYGPFGFLDDYEPGYICNHSDYQGRYAFNQQPRIGLWNLSALAHSLSPLIDKSDLEKALEQYEIKLHDYFSQLMRKKLGLLSKQEGDTRLFESMFELLSQNTVDYTRFMRVLSDLDSQDKQTVIDLFVDREAATLWVDLYLTRCKLEADSFDMRCSKMRKVNPKYVLRNYLAQQAIVKANEGDFSDVKILSTLLASPFDEHPDFERYAELPPEWGKRMEISCSS.

Residues G90, G92, R93, K113, D125, G126, R176, and R183 each coordinate ATP. D252 acts as the Proton acceptor in catalysis. The Mg(2+) site is built by N253 and D262. D262 is a binding site for ATP.

The protein belongs to the SELO family. Requires Mg(2+) as cofactor. It depends on Mn(2+) as a cofactor.

The enzyme catalyses L-seryl-[protein] + ATP = 3-O-(5'-adenylyl)-L-seryl-[protein] + diphosphate. It carries out the reaction L-threonyl-[protein] + ATP = 3-O-(5'-adenylyl)-L-threonyl-[protein] + diphosphate. It catalyses the reaction L-tyrosyl-[protein] + ATP = O-(5'-adenylyl)-L-tyrosyl-[protein] + diphosphate. The catalysed reaction is L-histidyl-[protein] + UTP = N(tele)-(5'-uridylyl)-L-histidyl-[protein] + diphosphate. The enzyme catalyses L-seryl-[protein] + UTP = O-(5'-uridylyl)-L-seryl-[protein] + diphosphate. It carries out the reaction L-tyrosyl-[protein] + UTP = O-(5'-uridylyl)-L-tyrosyl-[protein] + diphosphate. Its function is as follows. Nucleotidyltransferase involved in the post-translational modification of proteins. It can catalyze the addition of adenosine monophosphate (AMP) or uridine monophosphate (UMP) to a protein, resulting in modifications known as AMPylation and UMPylation. This Aliivibrio fischeri (strain MJ11) (Vibrio fischeri) protein is Protein nucleotidyltransferase YdiU.